Consider the following 102-residue polypeptide: Large ribosomal subunit protein bL21 (102 aa).

It belongs to the bacterial ribosomal protein bL21 family. In terms of assembly, part of the 50S ribosomal subunit. Contacts protein L20.

This protein binds to 23S rRNA in the presence of protein L20. The sequence is that of Large ribosomal subunit protein bL21 from Ehrlichia ruminantium (strain Welgevonden).